Consider the following 404-residue polypeptide: Schlafen-like protein 1 (404 aa).

Disordered regions lie at residues 1–31 and 139–170; these read MTPM…LPTE and GPLS…AWPT. Residues 7 to 16 show a composition bias toward polar residues; sequence SVQTQVSEPF. Residues 152–165 show a composition bias toward low complexity; the sequence is GLSPGPNPGSGVPL. 258–265 provides a ligand contact to ATP; sequence GVEDSGLV. Residues 365–395 adopt a coiled-coil conformation; it reads RWLVELGKLEERVKVLTMEKEQLQQQLQQHG.

It belongs to the Schlafen family. Subgroup I subfamily.

The protein is Schlafen-like protein 1 (SLFNL1) of Macaca fascicularis (Crab-eating macaque).